The chain runs to 638 residues: Cytoplasmic dynein 1 intermediate chain 2 (638 aa).

2 stretches are compositionally biased toward basic and acidic residues: residues M1–R13 and Q20–A43. Disordered regions lie at residues M1–P135 and V154–T209. N-acetylserine is present on S2. The residue at position 51 (S51) is a Diphosphoserine. Phosphoserine is present on residues S51 and S90. The segment covering P88–S97 has biased composition (low complexity). At T95 the chain carries Phosphothreonine. A phosphoserine mark is found at S97, S101, and S104. Residues R133–T165 are interaction with DYNLT1. Positions E190–T209 are enriched in basic and acidic residues. WD repeat units follow at residues S277–E326, H330–V370, A379–D420, S429–S469, G474–S519, and E568–R607.

Belongs to the dynein intermediate chain family. As to quaternary structure, homodimer. The cytoplasmic dynein 1 complex consists of two catalytic heavy chains (HCs) and a number of non-catalytic subunits presented by intermediate chains (ICs), light intermediate chains (LICs) and light chains (LCs); the composition seems to vary in respect to the IC, LIC and LC composition. The heavy chain homodimer serves as a scaffold for the probable homodimeric assembly of the respective non-catalytic subunits. The ICs and LICs bind directly to the HC dimer and the LCs assemble on the IC dimer. Interacts with DYNLT3. Interacts with DYNLT1. Interacts (dephosphorylated at Ser-90) with DCTN1. Interacts with BICD2. Interacts with SPEF2. Interacts with CFAP61. Post-translationally, the phosphorylation status of Ser-90 appears to be involved in dynactin-dependent target binding. In terms of processing, pyrophosphorylation by 5-diphosphoinositol pentakisphosphate (5-IP7) promotes interaction with DCTN1. Serine pyrophosphorylation is achieved by Mg(2+)-dependent, but enzyme independent transfer of a beta-phosphate from a inositol pyrophosphate to a pre-phosphorylated serine residue. As to expression, skeletal muscle, testis, kidney, brain, heart and spleen.

Its subcellular location is the cytoplasm. It localises to the cytoskeleton. Its function is as follows. Acts as one of several non-catalytic accessory components of the cytoplasmic dynein 1 complex that are thought to be involved in linking dynein to cargos and to adapter proteins that regulate dynein function. Cytoplasmic dynein 1 acts as a motor for the intracellular retrograde motility of vesicles and organelles along microtubules. The intermediate chains mediate the binding of dynein to dynactin via its 150 kDa component (p150-glued) DCTN1. Involved in membrane-transport, such as Golgi apparatus, late endosomes and lysosomes. The polypeptide is Cytoplasmic dynein 1 intermediate chain 2 (Dync1i2) (Rattus norvegicus (Rat)).